A 233-amino-acid polypeptide reads, in one-letter code: Ribonuclease 3 (233 aa).

The region spanning 5–127 (LERLCRKLGY…VIGAVYLDGG (123 aa)) is the RNase III domain. Residue Glu-40 participates in Mg(2+) binding. Asp-44 is a catalytic residue. 2 residues coordinate Mg(2+): Asp-113 and Glu-116. Residue Glu-116 is part of the active site. In terms of domain architecture, DRBM spans 156 to 226 (DPKTRLQEYL…ATRALALLLA (71 aa)).

Belongs to the ribonuclease III family. As to quaternary structure, homodimer. The cofactor is Mg(2+).

Its subcellular location is the cytoplasm. The enzyme catalyses Endonucleolytic cleavage to 5'-phosphomonoester.. Digests double-stranded RNA. Involved in the processing of primary rRNA transcript to yield the immediate precursors to the large and small rRNAs (23S and 16S). Processes some mRNAs, and tRNAs when they are encoded in the rRNA operon. Processes pre-crRNA and tracrRNA of type II CRISPR loci if present in the organism. In Nitrosococcus oceani (strain ATCC 19707 / BCRC 17464 / JCM 30415 / NCIMB 11848 / C-107), this protein is Ribonuclease 3.